The chain runs to 203 residues: dITP/XTP pyrophosphatase (203 aa).

Residue serine 9–lysine 14 participates in substrate binding. Residues glutamate 42 and aspartate 72 each coordinate Mg(2+). The active-site Proton acceptor is the aspartate 72. Substrate-binding positions include serine 73, phenylalanine 161–aspartate 164, lysine 184, and histidine 189–arginine 190.

It belongs to the HAM1 NTPase family. In terms of assembly, homodimer. Requires Mg(2+) as cofactor.

The enzyme catalyses XTP + H2O = XMP + diphosphate + H(+). The catalysed reaction is dITP + H2O = dIMP + diphosphate + H(+). It catalyses the reaction ITP + H2O = IMP + diphosphate + H(+). Its function is as follows. Pyrophosphatase that catalyzes the hydrolysis of nucleoside triphosphates to their monophosphate derivatives, with a high preference for the non-canonical purine nucleotides XTP (xanthosine triphosphate), dITP (deoxyinosine triphosphate) and ITP. Seems to function as a house-cleaning enzyme that removes non-canonical purine nucleotides from the nucleotide pool, thus preventing their incorporation into DNA/RNA and avoiding chromosomal lesions. The sequence is that of dITP/XTP pyrophosphatase from Acidobacterium capsulatum (strain ATCC 51196 / DSM 11244 / BCRC 80197 / JCM 7670 / NBRC 15755 / NCIMB 13165 / 161).